The sequence spans 467 residues: Asparagine--tRNA ligase (467 aa).

This sequence belongs to the class-II aminoacyl-tRNA synthetase family. Homodimer.

The protein localises to the cytoplasm. The enzyme catalyses tRNA(Asn) + L-asparagine + ATP = L-asparaginyl-tRNA(Asn) + AMP + diphosphate + H(+). The sequence is that of Asparagine--tRNA ligase from Haemophilus influenzae (strain PittGG).